The primary structure comprises 96 residues: Large ribosomal subunit protein bL21 (96 aa).

It belongs to the bacterial ribosomal protein bL21 family. In terms of assembly, part of the 50S ribosomal subunit. Contacts protein L20.

In terms of biological role, this protein binds to 23S rRNA in the presence of protein L20. The protein is Large ribosomal subunit protein bL21 of Sulfurihydrogenibium sp. (strain YO3AOP1).